The primary structure comprises 562 residues: Tetratricopeptide repeat protein 34 (562 aa).

Positions 1–30 are disordered; that stretch reads MLHKKPQRANENGISQRKKPSDQDNSSVKE. Residues 19–30 are compositionally biased toward basic and acidic residues; sequence KPSDQDNSSVKE. 8 TPR repeats span residues 51–84, 175–208, 210–242, 304–337, 388–421, 423–455, 461–494, and 509–542; these read DVSR…SSQR, KDSL…EPYN, EALS…DASY, AHFH…NAID, FQAA…SNNN, KYLR…HSSH, AEDY…EHAS, and AGIF…DENN.

This chain is Tetratricopeptide repeat protein 34 (ttc34), found in Xenopus laevis (African clawed frog).